The primary structure comprises 230 residues: UPF0173 metal-dependent hydrolase TM1040_1920 (230 aa).

This sequence belongs to the UPF0173 family.

In Ruegeria sp. (strain TM1040) (Silicibacter sp.), this protein is UPF0173 metal-dependent hydrolase TM1040_1920.